The chain runs to 706 residues: Choline transporter-like protein 2 (706 aa).

Residues 1 to 33 lie on the Cytoplasmic side of the membrane; sequence MGDERPHYYGKHGTPQKYDPTFKGPIYNRGCTD. Thr-14 bears the Phosphothreonine mark. The chain crosses the membrane as a helical span at residues 34–54; sequence IICCVFLLLAIVGYVAVGIIA. Residues 55-232 are Extracellular-facing; sequence WTHGDPRKVI…RIFEDYTVSW (178 aa). N-linked (GlcNAc...) asparagine glycosylation is found at Asn-187 and Asn-200. Residues 233–253 traverse the membrane as a helical segment; sequence YWIIIGLVIAMAMSLLFIILL. Topologically, residues 254-256 are cytoplasmic; sequence RFL. A helical membrane pass occupies residues 257–277; the sequence is AGIMVWVMIIMVILVLGYGIF. Topologically, residues 278–315 are extracellular; that stretch reads HCYMEYSRLRGEAGSDVSLVDLGFQTDFRVYLHLRQTW. Residues 316 to 336 traverse the membrane as a helical segment; that stretch reads LAFMIILSILEVIIILLLIFL. At 337 to 364 the chain is on the cytoplasmic side; sequence RKRILIAIALIKEASRAVGYVMCSLLYP. A helical transmembrane segment spans residues 365 to 385; that stretch reads LVTFFLLCLCIAYWASTAVFL. The Extracellular segment spans residues 386–457; it reads STSNEAVYKI…FNAFMFFWLA (72 aa). A glycan (N-linked (GlcNAc...) asparagine) is linked at Asn-417. Residues 458–480 traverse the membrane as a helical segment; sequence NFVLALGQVTLAGAFASYYWALR. Residues 481–504 are Cytoplasmic-facing; it reads KPDDLPAFPLFSAFGRALRYHTGS. The helical transmembrane segment at 505–525 threads the bilayer; it reads LAFGALILAIVQIIRVILEYL. The Extracellular segment spans residues 526–563; it reads DQRLKAAENKFAKCLMTCLKCCFWCLEKFIKFLNRNAY. The helical transmembrane segment at 564-584 threads the bilayer; sequence IMIAIYGTNFCTSARNAFFLL. Residues 585–599 are Cytoplasmic-facing; it reads MRNIIRVAVLDKVTD. A helical membrane pass occupies residues 600 to 620; the sequence is FLFLLGKLLIVGSVGILAFFF. Residues 621 to 638 lie on the Extracellular side of the membrane; the sequence is FTHRIRIVQDTAPPLNYY. A helical transmembrane segment spans residues 639–659; sequence WVPILTVIVGSYLIAHGFFSV. Topologically, residues 660 to 706 are cytoplasmic; that stretch reads YGMCVDTLFLCFLEDLERNDGSAERPYFMSSTLKKLLNKTNKKAAES.

The protein belongs to the CTL (choline transporter-like) family. As to quaternary structure, interacts with COCH. Present in supporting cells of the inner ear (at protein level). As to expression, expressed in inner ear vestibular tissue.

Its subcellular location is the cell membrane. The protein resides in the mitochondrion outer membrane. The enzyme catalyses choline(out) + n H(+)(in) = choline(in) + n H(+)(out). It catalyses the reaction ethanolamine(out) + n H(+)(in) = ethanolamine(in) + n H(+)(out). Functionally, choline/H+ antiporter, mainly in mitochodria. Also acts as a low-affinity ethanolamine/H+ antiporter, regulating the supply of extracellular ethanolamine (Etn) for the CDP-Etn pathway, redistribute intracellular Etn and balance the CDP-Cho and CDP-Etn arms of the Kennedy pathway. Does not exhibit choline transporter activity. The protein is Choline transporter-like protein 2 of Homo sapiens (Human).